We begin with the raw amino-acid sequence, 158 residues long: Transcription elongation factor GreA (158 aa).

Residues 48–74 adopt a coiled-coil conformation; it reads EYDAAKNRQGFIEGRIKELNDKIARAE.

The protein belongs to the GreA/GreB family.

In terms of biological role, necessary for efficient RNA polymerase transcription elongation past template-encoded arresting sites. The arresting sites in DNA have the property of trapping a certain fraction of elongating RNA polymerases that pass through, resulting in locked ternary complexes. Cleavage of the nascent transcript by cleavage factors such as GreA or GreB allows the resumption of elongation from the new 3'terminus. GreA releases sequences of 2 to 3 nucleotides. This chain is Transcription elongation factor GreA, found in Syntrophotalea carbinolica (strain DSM 2380 / NBRC 103641 / GraBd1) (Pelobacter carbinolicus).